We begin with the raw amino-acid sequence, 270 residues long: MIMTRKNILKAQRIVVKIGTSSLILPNGKINLSNIDELAFVLSDLNNKGYEVILVTSGAIGVGLNVLGMNKRPKGIADQQALASIGQVELMSLYTQMFRRYSQKVSQLLLTRDVTDFPTSRENPENALNALLALDIIPIINENDAIAVDEMDHQTKFGDNDKLGAIVSKLVHADLLIMLSDIDGLFDKNPTIYDDAKIFNEIHEITDELRQMAGGAGSRFGTGGMTSKLAAAQILFENDQEMVLTNGERIREIQQIIEGREIGTYFHQKF.

Residue lysine 17 participates in ATP binding. 3 residues coordinate substrate: serine 57, aspartate 144, and asparagine 160. ATP is bound by residues serine 180 to aspartate 181 and threonine 222 to lysine 228.

It belongs to the glutamate 5-kinase family.

It localises to the cytoplasm. The catalysed reaction is L-glutamate + ATP = L-glutamyl 5-phosphate + ADP. Its pathway is amino-acid biosynthesis; L-proline biosynthesis; L-glutamate 5-semialdehyde from L-glutamate: step 1/2. Its function is as follows. Catalyzes the transfer of a phosphate group to glutamate to form L-glutamate 5-phosphate. The sequence is that of Glutamate 5-kinase from Lactococcus lactis subsp. cremoris (strain SK11).